The sequence spans 147 residues: UPF0178 protein Nther_1836 (147 aa).

It belongs to the UPF0178 family.

The sequence is that of UPF0178 protein Nther_1836 from Natranaerobius thermophilus (strain ATCC BAA-1301 / DSM 18059 / JW/NM-WN-LF).